The following is a 264-amino-acid chain: Thiazole synthase (264 aa).

K106 acts as the Schiff-base intermediate with DXP in catalysis. 1-deoxy-D-xylulose 5-phosphate is bound by residues G167, 193 to 194 (AG), and 215 to 216 (NS).

Belongs to the ThiG family. Homotetramer. Forms heterodimers with either ThiH or ThiS.

Its subcellular location is the cytoplasm. It catalyses the reaction [ThiS sulfur-carrier protein]-C-terminal-Gly-aminoethanethioate + 2-iminoacetate + 1-deoxy-D-xylulose 5-phosphate = [ThiS sulfur-carrier protein]-C-terminal Gly-Gly + 2-[(2R,5Z)-2-carboxy-4-methylthiazol-5(2H)-ylidene]ethyl phosphate + 2 H2O + H(+). The protein operates within cofactor biosynthesis; thiamine diphosphate biosynthesis. Functionally, catalyzes the rearrangement of 1-deoxy-D-xylulose 5-phosphate (DXP) to produce the thiazole phosphate moiety of thiamine. Sulfur is provided by the thiocarboxylate moiety of the carrier protein ThiS. In vitro, sulfur can be provided by H(2)S. The polypeptide is Thiazole synthase (Prochlorococcus marinus (strain MIT 9312)).